A 117-amino-acid chain; its full sequence is Small ribosomal subunit protein uS12c (117 aa).

The segment at 9–40 (RNARQPIENRKKSPALRGCPQRRGTITPKKPN) is disordered.

This sequence belongs to the universal ribosomal protein uS12 family. Part of the 30S ribosomal subunit.

The protein localises to the plastid. Its subcellular location is the chloroplast. In terms of biological role, with S4 and S5 plays an important role in translational accuracy. Located at the interface of the 30S and 50S subunits. This Pinus koraiensis (Korean pine) protein is Small ribosomal subunit protein uS12c (rps12).